We begin with the raw amino-acid sequence, 124 residues long: Small ribosomal subunit protein uS12 (124 aa).

Positions 1–24 are disordered; the sequence is MPTISQLVRKGRAKITKKSKSAAL. The segment covering 9–20 has biased composition (basic residues); it reads RKGRAKITKKSK. Asp89 carries the 3-methylthioaspartic acid modification. Positions 105–124 are disordered; that stretch reads AGVEGRTQRRSKYGAKRPKK. Over residues 112-124 the composition is skewed to basic residues; the sequence is QRRSKYGAKRPKK.

Belongs to the universal ribosomal protein uS12 family. Part of the 30S ribosomal subunit. Contacts proteins S8 and S17. May interact with IF1 in the 30S initiation complex.

Functionally, with S4 and S5 plays an important role in translational accuracy. Interacts with and stabilizes bases of the 16S rRNA that are involved in tRNA selection in the A site and with the mRNA backbone. Located at the interface of the 30S and 50S subunits, it traverses the body of the 30S subunit contacting proteins on the other side and probably holding the rRNA structure together. The combined cluster of proteins S8, S12 and S17 appears to hold together the shoulder and platform of the 30S subunit. The sequence is that of Small ribosomal subunit protein uS12 from Christiangramia forsetii (strain DSM 17595 / CGMCC 1.15422 / KT0803) (Gramella forsetii).